The primary structure comprises 333 residues: Extracellular globin (333 aa).

The signal sequence occupies residues 1–18 (MHSSIVLAIVLFVAIASA). 2 consecutive Globin domains span residues 25-167 (CMKS…HHGR) and 174-318 (CMNS…KHAK). Residues glutamine 82 and histidine 114 each coordinate heme b. Asparagine 216 carries an N-linked (GlcNAc...) asparagine glycan. Positions 231 and 263 each coordinate heme b. Residues 314–333 (DKHAKAEKDHHEGEHKEEHH) form a disordered region.

It belongs to the globin family. Homooctamer.

The protein resides in the secreted. It is found in the extracellular space. This is Extracellular globin from Pseudoterranova decipiens (Sealworm).